Here is a 354-residue protein sequence, read N- to C-terminus: Fructose-bisphosphate aldolase (354 aa).

D-glyceraldehyde 3-phosphate is bound at residue serine 50. Aspartate 83 (proton donor) is an active-site residue. Zn(2+)-binding residues include histidine 84, aspartate 105, glutamate 142, and histidine 198. Residue glycine 199 participates in dihydroxyacetone phosphate binding. Position 232 (histidine 232) interacts with Zn(2+). Residues 233-235 (GSS) and 275-278 (NIDT) each bind dihydroxyacetone phosphate.

This sequence belongs to the class II fructose-bisphosphate aldolase family. In terms of assembly, homodimer. Requires Zn(2+) as cofactor.

It catalyses the reaction beta-D-fructose 1,6-bisphosphate = D-glyceraldehyde 3-phosphate + dihydroxyacetone phosphate. Its pathway is carbohydrate biosynthesis; Calvin cycle. It functions in the pathway carbohydrate degradation; glycolysis; D-glyceraldehyde 3-phosphate and glycerone phosphate from D-glucose: step 4/4. Activity is stimulated by Fe(2+) in autotrophically grown cells. Catalyzes the aldol condensation of dihydroxyacetone phosphate (DHAP or glycerone-phosphate) with glyceraldehyde 3-phosphate (G3P) to form fructose 1,6-bisphosphate (FBP) in gluconeogenesis and the reverse reaction in glycolysis. The sequence is that of Fructose-bisphosphate aldolase from Xanthobacter flavus.